We begin with the raw amino-acid sequence, 484 residues long: Acetyl-coenzyme A carboxylase carboxyl transferase subunit beta, chloroplastic (484 aa).

The region spanning 223 to 484 is the CoA carboxyltransferase N-terminal domain; it reads LWIQCDNCYG…LHAFFPLNKN (262 aa). Zn(2+) is bound by residues C227, C230, C243, and C246. A C4-type zinc finger spans residues 227–246; it reads CDNCYGLMYKKVKINVCEQC.

Belongs to the AccD/PCCB family. As to quaternary structure, acetyl-CoA carboxylase is a heterohexamer composed of biotin carboxyl carrier protein, biotin carboxylase and 2 subunits each of ACCase subunit alpha and ACCase plastid-coded subunit beta (accD). It depends on Zn(2+) as a cofactor.

The protein localises to the plastid. The protein resides in the chloroplast stroma. The catalysed reaction is N(6)-carboxybiotinyl-L-lysyl-[protein] + acetyl-CoA = N(6)-biotinyl-L-lysyl-[protein] + malonyl-CoA. The protein operates within lipid metabolism; malonyl-CoA biosynthesis; malonyl-CoA from acetyl-CoA: step 1/1. Functionally, component of the acetyl coenzyme A carboxylase (ACC) complex. Biotin carboxylase (BC) catalyzes the carboxylation of biotin on its carrier protein (BCCP) and then the CO(2) group is transferred by the transcarboxylase to acetyl-CoA to form malonyl-CoA. The chain is Acetyl-coenzyme A carboxylase carboxyl transferase subunit beta, chloroplastic from Capsella bursa-pastoris (Shepherd's purse).